A 759-amino-acid chain; its full sequence is Arylphorin subunit C223 (759 aa).

Residues 1–15 (MKIAIVLLAIVGLAA) form the signal peptide.

This sequence belongs to the hemocyanin family. In terms of assembly, heterohexamer. Fat body.

It is found in the secreted. The protein resides in the extracellular space. Arylphorin is a larval storage protein (LSP) which may serve as a storage protein used primarily as a source of aromatic amino acids for protein synthesis during metamorphosis. It is a constituent of the sclerotizing system of the cuticle, and serves as a carrier for ecdysteroid hormone. The chain is Arylphorin subunit C223 from Calliphora vicina (Blue blowfly).